A 456-amino-acid polypeptide reads, in one-letter code: uncharacterized protein (456 aa).

The TRAM domain occupies 3-61 (LMRKNETREFLIEDIEFPAVGVAFYNDKKVYIKGAVPGQKVLARVSKVRREKIEAKLKE). 4 residues coordinate [4Fe-4S] cluster: Cys74, Cys80, Cys83, and Cys163. Residues Gln289, Tyr318, Glu339, and Asp384 each coordinate S-adenosyl-L-methionine. The active-site Nucleophile is the Cys411.

The protein belongs to the class I-like SAM-binding methyltransferase superfamily. RNA M5U methyltransferase family.

This is an uncharacterized protein from Clostridium acetobutylicum (strain ATCC 824 / DSM 792 / JCM 1419 / IAM 19013 / LMG 5710 / NBRC 13948 / NRRL B-527 / VKM B-1787 / 2291 / W).